Consider the following 149-residue polypeptide: UPF0756 membrane protein BBR47_12340 (149 aa).

Helical transmembrane passes span 6–26 (IILL…LVYA), 48–68 (PMFH…IAKG), 86–106 (IAIL…SILP), and 120–140 (LLAV…AGCI).

It belongs to the UPF0756 family.

The protein resides in the cell membrane. The chain is UPF0756 membrane protein BBR47_12340 from Brevibacillus brevis (strain 47 / JCM 6285 / NBRC 100599).